We begin with the raw amino-acid sequence, 233 residues long: tRNA (guanine-N(1)-)-methyltransferase (233 aa).

S-adenosyl-L-methionine contacts are provided by residues Gly121 and Ile140 to Leu145.

The protein belongs to the RNA methyltransferase TrmD family. As to quaternary structure, homodimer.

Its subcellular location is the cytoplasm. The enzyme catalyses guanosine(37) in tRNA + S-adenosyl-L-methionine = N(1)-methylguanosine(37) in tRNA + S-adenosyl-L-homocysteine + H(+). Its function is as follows. Specifically methylates guanosine-37 in various tRNAs. This Endomicrobium trichonymphae protein is tRNA (guanine-N(1)-)-methyltransferase.